The primary structure comprises 60 residues: LQCNKLVPIASKTCPPGKNLCYKMFMVSDLTIPVKRGCIDVCPKNSLLVKYECCNTDRCN.

Intrachain disulfides connect cysteine 3–cysteine 21, cysteine 14–cysteine 38, cysteine 42–cysteine 53, and cysteine 54–cysteine 59.

It belongs to the three-finger toxin family. Short-chain subfamily. Type IA cytotoxin sub-subfamily. In terms of assembly, monomer in solution; Homodimer and oligomer in the presence of negatively charged lipids forming a pore with a size ranging between 20 and 30 Angstroms. Expressed by the venom gland.

Its subcellular location is the secreted. It is found in the target cell membrane. Its function is as follows. Shows cytolytic activity on many different cells by forming pore in lipid membranes. In vivo, increases heart rate or kills the animal by cardiac arrest. In addition, it binds to heparin with high affinity, interacts with Kv channel-interacting protein 1 (KCNIP1) in a calcium-independent manner, and binds to integrin alpha-V/beta-3 (ITGAV/ITGB3) with moderate affinity. Preferentially binds acidic phospholipids like phosphatidylserine, phosphatidic acid and phosphatidyl glycerol. Has hemolytic activity towards human erythrocytes (EC(50)=1.024 uM) and cytolytic activity towards various cell lines. In Naja naja (Indian cobra), this protein is Cytotoxin 2a.